Here is a 1249-residue protein sequence, read N- to C-terminus: LRR receptor-like serine/threonine-protein kinase GSO1 (1249 aa).

An N-terminal signal peptide occupies residues 1–18; sequence MQPLVLLLLFILCFSGLG. The Extracellular segment spans residues 19 to 876; sequence QPGIINNDLQ…QQGLSARSVV (858 aa). Residues Asn-77 and Asn-117 are each glycosylated (N-linked (GlcNAc...) asparagine). LRR repeat units follow at residues 94-118, 119-142, 144-166, 168-190, 191-214, 216-238, 239-262, 264-285, 286-310, 312-334, 336-359, 360-383, 385-407, 408-431, 433-455, 457-479, 480-503, 505-527, 528-551, 553-574, 576-598, 599-622, 623-646, 648-670, 671-694, 696-718, 719-742, 744-766, 767-791, 792-815, and 817-838; these read FDNLIHLDLSSNNLVGPIPTALSNL, TSLESLFLFSNQLTGEIPSQLGSL, NIRSLRIGDNELVGDIPETLGNL, NLQMLALASCRLTGPIPSQLGRL, VRVQSLILQDNYLEGPIPAELGNC, DLTVFTAAENMLNGTIPAELGRL, ENLEILNLANNSLTGEIPSQLGEM, QLQYLSLMANQLQGLIPKSLAD, LGNLQTLDLSANNLTGEIPEEFWNM, QLLDLVLANNHLSGSLPKSICSN, TNLEQLVLSGTQLSGEIPVELSKC, QSLKQLDLSNNSLAGSIPEALFEL, ELTDLYLHNNTLEGTLSPSISNL, TNLQWLVLYHNNLEGKLPKEISAL, KLEVLFLYENRFSGEIPQEIGNC, SLKMIDMFGNHFEGEIPPSIGRL, KELNLLHLRQNELVGGLPASLGNC, QLNILDLADNQLSGSIPSSFGFL, KGLEQLMLYNNSLQGNLPDSLISL, NLTRINLSHNRLNGTIHPLCGS, SYLSFDVTNNGFEDEIPLELGNS, QNLDRLRLGKNQLTGKIPWTLGKI, RELSLLDMSSNALTGTIPLQLVLC, KLTHIDLNNNFLSGPIPPWLGKL, SQLGELKLSSNQFVESLPTELFNC, KLLVLSLDGNSLNGSIPQEIGNL, GALNVLNLDKNQFSGSLPQAMGKL, KLYELRLSRNSLTGEIPVEIGQL, QDLQSALDLSYNNFTGDIPSTIGTL, SKLETLDLSHNQLTGEVPGSVGDM, and SLGYLNVSFNNLGGKLKKQFSR. N-linked (GlcNAc...) asparagine glycosylation is found at Asn-213, Asn-228, and Asn-248. 3 N-linked (GlcNAc...) asparagine glycosylation sites follow: Asn-298, Asn-309, and Asn-334. N-linked (GlcNAc...) asparagine glycans are attached at residues Asn-369, Asn-393, and Asn-406. Asn-454 carries an N-linked (GlcNAc...) asparagine glycan. 4 N-linked (GlcNAc...) asparagine glycosylation sites follow: Asn-537, Asn-553, Asn-558, and Asn-565. 2 N-linked (GlcNAc...) asparagine glycosylation sites follow: Asn-693 and Asn-708. Residue Asn-779 is glycosylated (N-linked (GlcNAc...) asparagine). N-linked (GlcNAc...) asparagine glycosylation is present at Asn-822. Residues 877–897 form a helical membrane-spanning segment; that stretch reads IISAISALTAIGLMILVIALF. Residues 898 to 1249 lie on the Cytoplasmic side of the membrane; that stretch reads FKQRHDFFKK…NNRTAGYKKL (352 aa). Thr-948 bears the Phosphothreonine mark. Residues 951 to 1240 enclose the Protein kinase domain; it reads LSEEFMIGSG…ACDSLLHVYN (290 aa). ATP is bound by residues 957–965 and Lys-979; that span reads IGSGGSGKV. Tyr-1027 and Tyr-1071 each carry phosphotyrosine. Asp-1084 functions as the Proton acceptor in the catalytic mechanism. Tyr-1129 and Tyr-1136 each carry phosphotyrosine.

It belongs to the protein kinase superfamily. Ser/Thr protein kinase family. Interacts with CIF1 and CIF2. In terms of tissue distribution, mostly expressed in siliques, seeds, developing embryos and seedlings, detected in flower buds and roots, but not in leaves or stems.

Its subcellular location is the cell membrane. It carries out the reaction L-seryl-[protein] + ATP = O-phospho-L-seryl-[protein] + ADP + H(+). It catalyses the reaction L-threonyl-[protein] + ATP = O-phospho-L-threonyl-[protein] + ADP + H(+). Its function is as follows. Together with GSO2, receptor-like serine/threonine-kinase required during the development of the epidermal surface in embryos and cotyledons. In coordination with GSO2, regulates root growth through control of cell division and cell fate specification. Controls seedling root growth by modulating sucrose response after germination. Receptor of the peptide hormones CIF1 and CIF2 required for contiguous Casparian strip diffusion barrier formation in roots. Required for localizing CASP proteins into the Casparian strip following an uninterrupted, ring-like domain, to trigger endodermal differentiation and thus regulate potassium ion (K) homeostasis. Involved in the maintenance of water transport and root pressure. May also be involved in the regulation of suberin accumulation in the endodermis. The protein is LRR receptor-like serine/threonine-protein kinase GSO1 of Arabidopsis thaliana (Mouse-ear cress).